Here is a 651-residue protein sequence, read N- to C-terminus: Acetyl-coenzyme A synthetase (651 aa).

CoA contacts are provided by residues 189 to 192 (RGGK), T311, and N335. ATP is bound by residues 387 to 389 (GEP), 411 to 416 (DTWWQT), D500, and R515. CoA is bound at residue S523. An ATP-binding site is contributed by R526. Residues V537, H539, and V542 each contribute to the Mg(2+) site. Position 584 (R584) interacts with CoA. K609 is subject to N6-acetyllysine.

Belongs to the ATP-dependent AMP-binding enzyme family. Requires Mg(2+) as cofactor. In terms of processing, acetylated. Deacetylation by the SIR2-homolog deacetylase activates the enzyme.

The enzyme catalyses acetate + ATP + CoA = acetyl-CoA + AMP + diphosphate. Catalyzes the conversion of acetate into acetyl-CoA (AcCoA), an essential intermediate at the junction of anabolic and catabolic pathways. AcsA undergoes a two-step reaction. In the first half reaction, AcsA combines acetate with ATP to form acetyl-adenylate (AcAMP) intermediate. In the second half reaction, it can then transfer the acetyl group from AcAMP to the sulfhydryl group of CoA, forming the product AcCoA. This Agrobacterium fabrum (strain C58 / ATCC 33970) (Agrobacterium tumefaciens (strain C58)) protein is Acetyl-coenzyme A synthetase.